The primary structure comprises 501 residues: ATP synthase subunit alpha (501 aa).

An ATP-binding site is contributed by 169-176 (GDRQTGKT).

The protein belongs to the ATPase alpha/beta chains family. In terms of assembly, F-type ATPases have 2 components, CF(1) - the catalytic core - and CF(0) - the membrane proton channel. CF(1) has five subunits: alpha(3), beta(3), gamma(1), delta(1), epsilon(1). CF(0) has three main subunits: a(1), b(2) and c(9-12). The alpha and beta chains form an alternating ring which encloses part of the gamma chain. CF(1) is attached to CF(0) by a central stalk formed by the gamma and epsilon chains, while a peripheral stalk is formed by the delta and b chains.

The protein localises to the cell inner membrane. The catalysed reaction is ATP + H2O + 4 H(+)(in) = ADP + phosphate + 5 H(+)(out). Functionally, produces ATP from ADP in the presence of a proton gradient across the membrane. The alpha chain is a regulatory subunit. This is ATP synthase subunit alpha from Campylobacter jejuni subsp. doylei (strain ATCC BAA-1458 / RM4099 / 269.97).